The following is a 112-amino-acid chain: Integration host factor subunit alpha (112 aa).

Belongs to the bacterial histone-like protein family. Heterodimer of an alpha and a beta chain.

Functionally, this protein is one of the two subunits of integration host factor, a specific DNA-binding protein that functions in genetic recombination as well as in transcriptional and translational control. In Agrobacterium fabrum (strain C58 / ATCC 33970) (Agrobacterium tumefaciens (strain C58)), this protein is Integration host factor subunit alpha.